Consider the following 60-residue polypeptide: UPF0434 protein YcaR (60 aa).

It belongs to the UPF0434 family.

In Escherichia coli O81 (strain ED1a), this protein is UPF0434 protein YcaR.